An 89-amino-acid polypeptide reads, in one-letter code: Sec-independent protein translocase protein TatA (89 aa).

The helical transmembrane segment at 1–21 (MGGISIWQLLIIALIVVLLFG) threads the bilayer. Positions 47-61 (EEKKALEENATDKPA) are enriched in basic and acidic residues. The disordered stretch occupies residues 47-89 (EEKKALEENATDKPAADTAKVTETAKVAETAEKKAESKGKEQA). Low complexity predominate over residues 62–74 (ADTAKVTETAKVA). The span at 75-89 (ETAEKKAESKGKEQA) shows a compositional bias: basic and acidic residues.

This sequence belongs to the TatA/E family. The Tat system comprises two distinct complexes: a TatABC complex, containing multiple copies of TatA, TatB and TatC subunits, and a separate TatA complex, containing only TatA subunits. Substrates initially bind to the TatABC complex, which probably triggers association of the separate TatA complex to form the active translocon.

The protein resides in the cell inner membrane. Its function is as follows. Part of the twin-arginine translocation (Tat) system that transports large folded proteins containing a characteristic twin-arginine motif in their signal peptide across membranes. TatA could form the protein-conducting channel of the Tat system. The sequence is that of Sec-independent protein translocase protein TatA from Shewanella pealeana (strain ATCC 700345 / ANG-SQ1).